A 1499-amino-acid polypeptide reads, in one-letter code: Autophagy-related protein 2 (1499 aa).

Over residues 211 to 221 (EQSVPSYGSSS) the composition is skewed to polar residues. Residues 211–237 (EQSVPSYGSSSSDKEDDNTSDSEDPLS) are disordered. A compositionally biased stretch (acidic residues) spans 224 to 234 (KEDDNTSDSED).

It belongs to the ATG2 family.

It localises to the preautophagosomal structure membrane. Its subcellular location is the endoplasmic reticulum membrane. It catalyses the reaction a 1,2-diacyl-sn-glycero-3-phosphocholine(in) = a 1,2-diacyl-sn-glycero-3-phosphocholine(out). It carries out the reaction a 1,2-diacyl-sn-glycero-3-phospho-L-serine(in) = a 1,2-diacyl-sn-glycero-3-phospho-L-serine(out). The catalysed reaction is a 1,2-diacyl-sn-glycero-3-phosphoethanolamine(in) = a 1,2-diacyl-sn-glycero-3-phosphoethanolamine(out). Lipid transfer protein required for autophagosome completion and peroxisome degradation. Tethers the edge of the isolation membrane (IM) to the endoplasmic reticulum (ER) and mediates direct lipid transfer from ER to IM for IM expansion. ATG2 binds to the ER exit site (ERES), which is the membrane source for autophagosome formation, using basic residues in its N-terminal region (NR) and to the expanding edge of the IM through its C-terminal region. The latter binding is assisted by an ATG18-PtdIns3P interaction. ATG2 then extracts phospholipids from the membrane source using its NR and transfers them to ATG9 to the IM through its predicted beta-sheet-rich structure for membrane expansion. The chain is Autophagy-related protein 2 from Kluyveromyces marxianus (strain DMKU3-1042 / BCC 29191 / NBRC 104275) (Yeast).